We begin with the raw amino-acid sequence, 313 residues long: UPF0761 membrane protein VV1_0885 (313 aa).

A run of 6 helical transmembrane segments spans residues 41 to 61 (YLAY…LSIL), 104 to 124 (MTAV…SNID), 139 to 159 (AVFS…LVGA), 185 to 205 (LLRW…YLLV), 215 to 235 (AVVG…GFAA), and 249 to 269 (ALAA…IVLI). The segment at 294 to 313 (PNNDTELEKDTQRDRFDSES) is disordered. The segment covering 299 to 313 (ELEKDTQRDRFDSES) has biased composition (basic and acidic residues).

This sequence belongs to the UPF0761 family.

The protein resides in the cell inner membrane. The sequence is that of UPF0761 membrane protein VV1_0885 from Vibrio vulnificus (strain CMCP6).